Reading from the N-terminus, the 945-residue chain is Nonsense-mediated mRNA decay factor SMG8 (945 aa).

Disordered stretches follow at residues Arg563 to Glu604 and Ala633 to Ala671.

The protein belongs to the SMG8 family.

Involved in nonsense-mediated decay (NMD) of mRNAs containing premature stop codons. Probable component of kinase complex containing nonC and recruited to stalled ribosomes. The polypeptide is Nonsense-mediated mRNA decay factor SMG8 (Drosophila grimshawi (Hawaiian fruit fly)).